We begin with the raw amino-acid sequence, 109 residues long: MFGKGGLGGLMKQAQQMQEKMQKMQEEIAQLEVTGESGAGLVKITINGAHNCRRIDIDPSLMEDDKEMLEDLIAAAFNDAVRRAEELQKEKMASVTAGMPLPPGMKFPF.

It belongs to the YbaB/EbfC family. In terms of assembly, homodimer.

The protein localises to the cytoplasm. The protein resides in the nucleoid. Binds to DNA and alters its conformation. May be involved in regulation of gene expression, nucleoid organization and DNA protection. The chain is Nucleoid-associated protein HI_0442 from Haemophilus influenzae (strain ATCC 51907 / DSM 11121 / KW20 / Rd).